The chain runs to 576 residues: Type II restriction enzyme BsuRI (576 aa).

Monomer. Mg(2+) serves as cofactor.

The catalysed reaction is Endonucleolytic cleavage of DNA to give specific double-stranded fragments with terminal 5'-phosphates.. In terms of biological role, a P subtype restriction enzyme that recognizes the double-stranded sequence 5'-GGCC-3' and cleaves after G-2. In Bacillus subtilis, this protein is Type II restriction enzyme BsuRI (hsdRR).